The primary structure comprises 87 residues: MVVIRLSRGGSKGRPFFNIVVSDKRVRRDGRFIERLGFYNPTAKENEESIRIAQDRLAYWKSVGAQASPTVLRLIKQAAAAAPKAAA.

Belongs to the bacterial ribosomal protein bS16 family.

This is Small ribosomal subunit protein bS16 from Variovorax paradoxus (strain S110).